We begin with the raw amino-acid sequence, 821 residues long: G-type lectin S-receptor-like serine/threonine-protein kinase SD2-5 (821 aa).

The N-terminal stretch at 1-21 is a signal peptide; sequence MRGVFIVIVTCLVFLPDPLRA. Residues 22-429 are Extracellular-facing; that stretch reads GVASIGSITP…NGEDDGKHFP (408 aa). Positions 33–148 constitute a Bulb-type lectin domain; that stretch reads FGGSQMNYIN…DGTSIWESFD (116 aa). Residues N51, N121, N174, and N248 are each glycosylated (N-linked (GlcNAc...) asparagine). An EGF-like; atypical domain is found at 280-314; it reads PSDLCGTPEPCGPYYVCSGSKVCGCVSGLSRARSD. Cystine bridges form between C284-C296 and C290-C302. The PAN domain occupies 323-411; the sequence is CKKTKDNATL…SGFVSYIKIA (89 aa). N329, N370, and N380 each carry an N-linked (GlcNAc...) asparagine glycan. 2 cysteine pairs are disulfide-bonded: C363–C385 and C367–C373. Residues 430-450 traverse the membrane as a helical segment; sequence YVVIIVVVTVFIIAVLIFVAF. Over 451–821 the chain is Cytoplasmic; the sequence is RIHKRKKMIL…LSAVRLSGPR (371 aa). One can recognise a Protein kinase domain in the interval 493–768; sequence NNFSVKLGQG…KVVQMLEGVF (276 aa). ATP contacts are provided by residues 499 to 507 and K521; that span reads LGQGGFGSV. The tract at residues 581 to 599 is caM-binding; that stretch reads KDGDVLLDWDTRFNIALGT. D618 serves as the catalytic Proton acceptor. Phosphoserine is present on S635. Position 652 is a phosphothreonine (T652).

This sequence belongs to the protein kinase superfamily. Ser/Thr protein kinase family. As to quaternary structure, interacts with PUB9, PUB13, PUB14 and PUB29.

The protein resides in the membrane. It carries out the reaction L-seryl-[protein] + ATP = O-phospho-L-seryl-[protein] + ADP + H(+). The enzyme catalyses L-threonyl-[protein] + ATP = O-phospho-L-threonyl-[protein] + ADP + H(+). The sequence is that of G-type lectin S-receptor-like serine/threonine-protein kinase SD2-5 (SD25) from Arabidopsis thaliana (Mouse-ear cress).